Reading from the N-terminus, the 122-residue chain is UPF0102 protein TTE1452 (122 aa).

This sequence belongs to the UPF0102 family.

In Caldanaerobacter subterraneus subsp. tengcongensis (strain DSM 15242 / JCM 11007 / NBRC 100824 / MB4) (Thermoanaerobacter tengcongensis), this protein is UPF0102 protein TTE1452.